We begin with the raw amino-acid sequence, 985 residues long: Regulator of telomere elongation helicase 1 homolog (985 aa).

Positions 7–303 (AGIPVHFPFE…QDMAGDEPKD (297 aa)) constitute a Helicase ATP-binding domain. Residue 42 to 49 (SPTGTGKT) participates in ATP binding. 4 residues coordinate [4Fe-4S] cluster: cysteine 146, cysteine 164, cysteine 173, and cysteine 209. The short motif at 252–255 (DEAH) is the DEAH box element. Residue threonine 874 is modified to Phosphothreonine.

This sequence belongs to the helicase family. RAD3/XPD subfamily.

Its subcellular location is the nucleus. The catalysed reaction is ATP + H2O = ADP + phosphate + H(+). Functionally, a probable ATP-dependent DNA helicase implicated in DNA repair and the maintenance of genomic stability. Acts as an anti-recombinase to counteract toxic recombination and limit crossover during meiosis. Regulates meiotic recombination and crossover homeostasis by physically dissociating strand invasion events and thereby promotes noncrossover repair by meiotic synthesis dependent strand annealing (SDSA) as well as disassembly of D loop recombination intermediates. This is Regulator of telomere elongation helicase 1 homolog from Drosophila erecta (Fruit fly).